The following is a 343-amino-acid chain: MIKLSNITKVFQQGTRTIQALNNVSLHVPAGQIYGVIGASGAGKSTLIRCVNLLERPTEGSVQVGGQELTTLSESELTKARRQIGMIFQHFNLLSSRTVFGNVALPLELDNTPKEEIKRRVTELLDLVGLGDKHDSYPANLSGGQKQRVAIARALASNPKVLLCDEATSALDPATTRSILELLKDINRRLGLTILLITHEMDVVKRICDCVAVISNGELIEQDTVSEVFSHPKTPLAQKFIQSTLHLDIPEDYQARLKASPETDSVPMLRMEFTGQSVDAPLLSETARRFNVNNNIISAQMDYAGGVKFGIMLTEMHGTQEETQAAIAWLQDHHVKVEVLGYV.

Residues 2–241 (IKLSNITKVF…PKTPLAQKFI (240 aa)) enclose the ABC transporter domain. 38–45 (GASGAGKS) contributes to the ATP binding site.

Belongs to the ABC transporter superfamily. Methionine importer (TC 3.A.1.24) family. The complex is composed of two ATP-binding proteins (MetN), two transmembrane proteins (MetI) and a solute-binding protein (MetQ).

Its subcellular location is the cell inner membrane. It catalyses the reaction L-methionine(out) + ATP + H2O = L-methionine(in) + ADP + phosphate + H(+). The catalysed reaction is D-methionine(out) + ATP + H2O = D-methionine(in) + ADP + phosphate + H(+). Its function is as follows. Part of the ABC transporter complex MetNIQ involved in methionine import. Responsible for energy coupling to the transport system. In Salmonella typhimurium (strain LT2 / SGSC1412 / ATCC 700720), this protein is Methionine import ATP-binding protein MetN 1.